Consider the following 560-residue polypeptide: Nibrin homolog (560 aa).

The FHA domain occupies 25-87; it reads YKVGRKDCDV…YGTFFNKVQG (63 aa). The BRCT domain maps to 115–190; it reads TFRLSFVPIV…KQIVLGDWFK (76 aa). The Nuclear localization signal motif lies at 511–518; that stretch reads YKRGTVID.

This sequence belongs to the Nibrin family. Component of the MRN complex composed of two heterodimers RAD50 and MRE11 associated with a single NBS1.

The protein localises to the nucleus. It localises to the chromosome. Component of the MRN complex, which plays a central role in double-strand break (DSB) repair, DNA recombination, maintenance of telomere integrity and meiosis. The MRN complex is involved in the repair of DNA double-strand breaks (DSBs) via homologous recombination (HR), an error-free mechanism which primarily occurs during S and G2 phases. The complex (1) mediates the end resection of damaged DNA, which generates proper single-stranded DNA, a key initial steps in HR, and is (2) required for the recruitment of other repair factors and efficient activation of ATM and ATR upon DNA damage. The MRN complex possesses single-strand endonuclease activity and double-strand-specific 3'-5' exonuclease activity, which are provided by MRE11, to initiate end resection, which is required for single-strand invasion and recombination. Within the MRN complex, NBS1 acts as a protein-protein adapter, which specifically recognizes and binds phosphorylated proteins, promoting their recruitment to DNA damage sites. Recruits MRE11 and RAD50 components of the MRN complex to DSBs in response to DNA damage. The protein is Nibrin homolog of Oryza sativa subsp. indica (Rice).